We begin with the raw amino-acid sequence, 168 residues long: Disulfide bond formation protein B 2 (168 aa).

Over 1–9 the chain is Cytoplasmic; sequence MLPARLRTF. A helical transmembrane segment spans residues 10–26; the sequence is FLPACLVALAVLVASFR. Topologically, residues 27–44 are periplasmic; it reads LENTVGLMPCPLCLSQRL. An intrachain disulfide couples cysteine 36 to cysteine 39. Residues 45–61 form a helical membrane-spanning segment; sequence LLGGYALLCFAAVLQAP. Over 62–67 the chain is Cytoplasmic; the sequence is GTRGIL. Residues 68–85 form a helical membrane-spanning segment; it reads RYARLALGCSLAGALLAA. Residues 86–140 lie on the Periplasmic side of the membrane; that stretch reads RHVWLQGAEGVNEVCPVPIGRVFEQSWSEAARQLLLGGPDCRSLAWSFLDLTLPE. Residues cysteine 100 and cysteine 126 are joined by a disulfide bond. The chain crosses the membrane as a helical span at residues 141–159; sequence WSLLAFLLLAVLPLSCLLA. The Cytoplasmic portion of the chain corresponds to 160–168; it reads YRFRTLART.

It belongs to the DsbB family.

It is found in the cell inner membrane. Its function is as follows. Required for disulfide bond formation in some periplasmic proteins. Acts by oxidizing the DsbA protein. In Pseudomonas putida (strain ATCC 47054 / DSM 6125 / CFBP 8728 / NCIMB 11950 / KT2440), this protein is Disulfide bond formation protein B 2 (dsbB2).